The sequence spans 352 residues: Rhodopsin (352 aa).

Residues Met-1–Lys-36 are Extracellular-facing. Asn-2 and Asn-15 each carry an N-linked (GlcNAc...) asparagine glycan. Residues Tyr-37 to Val-61 form a helical membrane-spanning segment. Residues Thr-62–Asn-73 lie on the Cytoplasmic side of the membrane. Residues Tyr-74–Tyr-96 traverse the membrane as a helical segment. Over Thr-97–Cys-110 the chain is Extracellular. A disulfide bridge connects residues Cys-110 and Cys-187. Residues Tyr-111–Ile-133 traverse the membrane as a helical segment. The 'Ionic lock' involved in activated form stabilization motif lies at Glu-134–Tyr-136. The Cytoplasmic portion of the chain corresponds to Glu-134–His-152. Residues Ala-153–Val-173 traverse the membrane as a helical segment. The Extracellular segment spans residues Gly-174 to Ser-202. Residues Phe-203–Gly-224 form a helical membrane-spanning segment. The Cytoplasmic segment spans residues Arg-225–Arg-252. Residues Met-253–Tyr-274 form a helical membrane-spanning segment. Residues Ile-275–Val-286 are Extracellular-facing. Residues Phe-287–Val-308 traverse the membrane as a helical segment. Position 296 is an N6-(retinylidene)lysine (Lys-296). The Cytoplasmic portion of the chain corresponds to Met-309 to Ala-352. Residues Cys-322 and Cys-323 are each lipidated (S-palmitoyl cysteine). Residues Glu-332 to Ala-352 are disordered. Low complexity predominate over residues Thr-335 to Ala-352.

It belongs to the G-protein coupled receptor 1 family. Opsin subfamily. In terms of processing, contains one covalently linked retinal chromophore. Upon light absorption, the covalently bound 11-cis-retinal is converted to all-trans-retinal. After hydrolysis of the Schiff base and release of the covalently bound all-trans-retinal, active rhodopsin is regenerated by binding of a fresh molecule of 11-cis-retinal. As to expression, expressed in rod-shaped photoreceptor cells in the retina that mediate vision in dim ligh (at protein level).

The protein resides in the membrane. The protein localises to the cell projection. It localises to the cilium. Its subcellular location is the photoreceptor outer segment. In terms of biological role, photoreceptor required for image-forming vision at low light intensity. Required for photoreceptor cell viability after birth. Light-induced isomerization of 11-cis to all-trans retinal triggers a conformational change that activates signaling via G-proteins. Subsequent receptor phosphorylation mediates displacement of the bound G-protein alpha subunit by arrestin and terminates signaling. In Alligator mississippiensis (American alligator), this protein is Rhodopsin (RHO).